Consider the following 324-residue polypeptide: Probable pectinesterase A (324 aa).

The signal sequence occupies residues 1 to 19 (MHGSLLKLALLSFSLGSSA). Q142 provides a ligand contact to substrate. D165 functions as the Proton donor in the catalytic mechanism. The active-site Nucleophile is the D186. Substrate is bound by residues R246 and W248. An N-linked (GlcNAc...) asparagine glycan is attached at N285.

The protein belongs to the pectinesterase family.

It localises to the secreted. The catalysed reaction is [(1-&gt;4)-alpha-D-galacturonosyl methyl ester](n) + n H2O = [(1-&gt;4)-alpha-D-galacturonosyl](n) + n methanol + n H(+). It participates in glycan metabolism; pectin degradation; 2-dehydro-3-deoxy-D-gluconate from pectin: step 1/5. In terms of biological role, involved in maceration and soft-rotting of plant tissue. This Aspergillus oryzae (strain ATCC 42149 / RIB 40) (Yellow koji mold) protein is Probable pectinesterase A (pmeA).